A 517-amino-acid polypeptide reads, in one-letter code: DNA primase DnaG (517 aa).

In terms of domain architecture, Toprim spans 171–257 (DAIIILEGRA…CVEDLVQKEV (87 aa)). Mg(2+) contacts are provided by glutamate 177, aspartate 219, and aspartate 221.

This sequence belongs to the archaeal DnaG primase family. As to quaternary structure, forms a ternary complex with MCM helicase and DNA. Component of the archaeal exosome complex. The cofactor is Mg(2+).

It catalyses the reaction ssDNA + n NTP = ssDNA/pppN(pN)n-1 hybrid + (n-1) diphosphate.. In terms of biological role, RNA polymerase that catalyzes the synthesis of short RNA molecules used as primers for DNA polymerase during DNA replication. Also part of the exosome, which is a complex involved in RNA degradation. Acts as a poly(A)-binding protein that enhances the interaction between heteromeric, adenine-rich transcripts and the exosome. The chain is DNA primase DnaG from Methanosarcina barkeri (strain Fusaro / DSM 804).